We begin with the raw amino-acid sequence, 178 residues long: ATP synthase subunit delta (178 aa).

It belongs to the ATPase delta chain family. As to quaternary structure, F-type ATPases have 2 components, F(1) - the catalytic core - and F(0) - the membrane proton channel. F(1) has five subunits: alpha(3), beta(3), gamma(1), delta(1), epsilon(1). F(0) has three main subunits: a(1), b(2) and c(10-14). The alpha and beta chains form an alternating ring which encloses part of the gamma chain. F(1) is attached to F(0) by a central stalk formed by the gamma and epsilon chains, while a peripheral stalk is formed by the delta and b chains.

It is found in the cell inner membrane. Its function is as follows. F(1)F(0) ATP synthase produces ATP from ADP in the presence of a proton or sodium gradient. F-type ATPases consist of two structural domains, F(1) containing the extramembraneous catalytic core and F(0) containing the membrane proton channel, linked together by a central stalk and a peripheral stalk. During catalysis, ATP synthesis in the catalytic domain of F(1) is coupled via a rotary mechanism of the central stalk subunits to proton translocation. This protein is part of the stalk that links CF(0) to CF(1). It either transmits conformational changes from CF(0) to CF(1) or is implicated in proton conduction. In Azotobacter vinelandii (strain DJ / ATCC BAA-1303), this protein is ATP synthase subunit delta.